Here is a 1609-residue protein sequence, read N- to C-terminus: MAGLRRPQPGCYCRTAAAVNLLLGVFQVLLPCCRPGGAQGQAIEPLPNVVELWQAEEGELLLPTQGDSEEGLEEPSQEQSFSDKLFSGKGLHFQPSVLDFGIQFLGHPVAKILHAYNPSRDSEVVVNSVFAAAGHFHVPPVPCRVIPAMGKTSFRIIFLPTEEGSIESSLFINTSSYGVLSYHVSGIGTRRISTEGSAKQLPNAYFLLPKVQSIQLSQMQAETTNTSLLQVQLECSLHNKVCQQLKGCYLESDDVLRLQMSIMVTMENFSKEFEENTQHLLDHLSIVYVATDESETSDDSAVNMYILHSGNSLIWIQDIRHFSQRDALSLQFEPVLLPTSTTNFTKIASFTCKATSCDSGIIEDVKKTTHTPTLKACLFSSVAQGYFRMDSSATQFHIETHENTSGLWSIWYRNHFDRSVVLNDVFLSKETKHMLKILNFTGPLFLPPGCWNIFSLKLAVKDIAINLFTNVFLTTNIGAIFAIPLQIYSAPTKEGSLGFEVIAHCGMHYFMGKSKAGNPNWNGSLSLDQSTWNVDSELANKLYERWKKYKNGDVCKRNVLGTTRFAHLKKSKESESFVFFLPRLIAEPGLMLNFSATALRSRMIKYFVVQNPSSWPVSLQLLPLSLYPKPEALVHLLHRWFGTDMQMINFTTGEFQLTEACPYLGTHSEESRFGILHLHLQPLEMKRVGVVFTPADYGKVTSLILIRNNLTVIDMIGVEGFGARELLKVGGRLPGAGGSLRFKVPESTLMDCRRQLKDSKQILSITKNFKVENIGPLPITVSSLKINGYNCQGYGFEVLDCHQFSLDPNTSRDISIVFTPDFTSSWVIRDLSLVTAADLEFRFTLNVTLPHHLLPLCADVVPGPSWEESFWRLTVFFVSLSLLGVILIAFQQAQYILMEFMKTRQRQNASSSSQQNNGPMDVISPHSYKSNCKNFLDTYGPSDKGRGKNCLPVNTPQSRIQNAAKRSPATYGHSQKKHKCSVYYSKHKTSTAAASSTSTTTEEKQTSPLGSSLPAAKEDICTDAMRENWISLRYASGINVNLQKNLTLPKNLLNKEENTLKNTIVFSNPSSECSMKEGIQTCMFPKETDIKTSENTAEFKERELCPLKTSKKLPENHLPRNSPQYHQPDLPEISRKNNGNNQQVPVKNEVDHCENLKKVDTKPSSEKKIHKTSREDMFSEKQDIPFVEQEDPYRKKKLQEKREGNLQNLNWSKSRTCRKNKKRGVAPVSRPPEQSDLKLVCSDFERSELSSDINVRSWCIQESTREVCKADAEIASSLPAAQREAEGYYQKPEKKCVDKFCSDSSSDCGSSSGSVRASRGSWGSWSSTSSSDGDKKPMVDAQHFLPAGDSVSQNDFPSEAPISLNLSHNICNPMTVNSLPQYAEPSCPSLPAGPTGVEEDKGLYSPGDLWPTPPVCVTSSLNCTLENGVPCVIQESAPVHNSFIDWSATCEGQFSSAYCPLELNDYNAFPEENMNYANGFPCPADVQTDFIDHNSQSTWNTPPNMPAAWGHASFISSPPYLTSTRSLSPMSGLFGSIWAPQSDVYENCCPINPTTEHSTHMENQAVVCKEYYPGFNPFRAYMNLDIWTTTANRNANFPLSRDSSYCGNV.

A signal peptide spans 1–40 (MAGLRRPQPGCYCRTAAAVNLLLGVFQVLLPCCRPGGAQG). At 41 to 869 (QAIEPLPNVV…VVPGPSWEES (829 aa)) the chain is on the extracellular side. N-linked (GlcNAc...) asparagine glycans are attached at residues N343, N439, N522, N593, N709, and N846. Positions 696 to 916 (DYGKVTSLIL…QNASSSSQQN (221 aa)) are required for Wnt-signaling inhibition and LRP6 degradation. A helical transmembrane segment spans residues 870–890 (FWRLTVFFVSLSLLGVILIAF). The Cytoplasmic segment spans residues 891–1609 (QQAQYILMEF…SRDSSYCGNV (719 aa)). Disordered regions lie at residues 946–974 (RGKNCLPVNTPQSRIQNAAKRSPATYGHS), 991–1014 (TAAASSTSTTTEEKQTSPLGSSLP), 1108–1144 (KTSKKLPENHLPRNSPQYHQPDLPEISRKNNGNNQQV), 1159–1178 (VDTKPSSEKKIHKTSREDMF), and 1304–1340 (SSSDCGSSSGSVRASRGSWGSWSSTSSSDGDKKPMVD). The span at 952 to 961 (PVNTPQSRIQ) shows a compositional bias: polar residues. Low complexity predominate over residues 991–1000 (TAAASSTSTT). Phosphoserine is present on S1122. A compositionally biased stretch (low complexity) spans 1304–1331 (SSSDCGSSSGSVRASRGSWGSWSSTSSS).

Belongs to the TMEM131 family. As to expression, expressed in thymocytes.

It is found in the cell membrane. The protein resides in the cytoplasm. It localises to the endoplasmic reticulum. In terms of biological role, membrane-associated form that antagonizes canonical Wnt signaling by triggering lysosome-dependent degradation of Wnt-activated LRP6. Regulates thymocyte proliferation. This is Transmembrane protein 131-like from Homo sapiens (Human).